Here is a 239-residue protein sequence, read N- to C-terminus: Mitochondrial fission factor homolog B (239 aa).

Over 1–219 (MAEINRMQYE…ENKERVKHEM (219 aa)) the chain is Cytoplasmic. Residues 107–139 (EGPAPATPHSKEVRSSGHLKRDGLASENSLRQN) form a disordered region. The span at 115 to 130 (HSKEVRSSGHLKRDGL) shows a compositional bias: basic and acidic residues. Residues 184 to 214 (DLALADAASLRRQIIKLNRRLLLLEEENKER) adopt a coiled-coil conformation. Residues 220–237 (TMYSIIIIFGLLNSWLWF) form a helical; Anchor for type IV membrane protein membrane-spanning segment. The Extracellular segment spans residues 238-239 (RR).

Belongs to the Tango11 family.

It is found in the mitochondrion outer membrane. Its subcellular location is the peroxisome. Its function is as follows. Plays a role in mitochondrial and peroxisomal fission. Promotes the recruitment and association of the fission mediator dynamin-related protein 1 (DNM1L) to the mitochondrial surface. This is Mitochondrial fission factor homolog B (mff-b) from Xenopus laevis (African clawed frog).